We begin with the raw amino-acid sequence, 207 residues long: Outer-membrane lipoprotein LolB (207 aa).

The signal sequence occupies residues 1 to 26 (MSKLKIDTKRRFSLLIALVLIISLSS). Cys-27 is lipidated: N-palmitoyl cysteine. Residue Cys-27 is the site of S-diacylglycerol cysteine attachment.

It belongs to the LolB family. In terms of assembly, monomer.

It is found in the cell outer membrane. Its function is as follows. Plays a critical role in the incorporation of lipoproteins in the outer membrane after they are released by the LolA protein. The polypeptide is Outer-membrane lipoprotein LolB (Francisella tularensis subsp. tularensis (strain FSC 198)).